The sequence spans 276 residues: Glutamate 5-kinase (276 aa).

K14 is an ATP binding site. Residues S54, D141, and N157 each coordinate substrate. ATP contacts are provided by residues 177–178 (SD) and 219–225 (TGGMLTK).

Belongs to the glutamate 5-kinase family.

The protein localises to the cytoplasm. It catalyses the reaction L-glutamate + ATP = L-glutamyl 5-phosphate + ADP. Its pathway is amino-acid biosynthesis; L-proline biosynthesis; L-glutamate 5-semialdehyde from L-glutamate: step 1/2. In terms of biological role, catalyzes the transfer of a phosphate group to glutamate to form L-glutamate 5-phosphate. This is Glutamate 5-kinase from Listeria monocytogenes serotype 4a (strain HCC23).